A 504-amino-acid chain; its full sequence is Pre-mRNA-processing factor 19 (504 aa).

Position 2 is an N-acetylserine (serine 2). The U-box domain maps to 2–73 (SLICSISNEV…KPPSATSIPA (72 aa)). Residues 68–223 (ATSIPAILKA…VGLHSASIPG (156 aa)) are may mediate interaction with PSMC5. N6-acetyllysine occurs at positions 122, 179, 244, and 261. The WD 1 repeat unit spans residues 219-259 (ASIPGILALDLCPSDTNKILTGGADKNVVVFDKSSEQILAT). 6 WD repeats span residues 262–301 (GHTK…CVQV), 304–345 (AHES…TKVT), 348–387 (TSGC…NVAN), 390–429 (GHSG…NFKT), 433–472 (DNNF…LHFT), and 473–503 (EHSG…KFYS).

The protein belongs to the WD repeat PRP19 family. Homotetramer. Component of activated, catalytic and post-catalytic spliceosomes. Component of the Prp19 complex/PRP19C/Nineteen complex/NTC and related complexes described as PRP19-CDC5L splicing complex and PSO4 complex. A homotetramer of PRPF19, CDC5L, PLRG1 and BCAS2 constitute the core of those complexes. The interaction with CDC5L, PLRG1 and BCAS2 is direct within this core complex. At least three less stably associated proteins CTNNBL1, CWC15 and HSPA8 are found in the Prp19 complex. The Prp19 complex associates with the spliceosome during its assembly and remodeling recruiting additional proteins. Component of the XAB2 complex, a multimeric protein complex composed of XAB2, PRPF19, AQR, ZNF830, ISY1, and PPIE. Interacts with CWC22 and EIF4A3 in an RNA-independent manner. Interacts with RPA1 and RPA2; the PRP19-CDC5L complex is recruited to the sites of DNA repair where it interacts with the replication protein A complex (RPA). Interacts with SETMAR; required for SETMAR recruitment to site of DNA damage. Interacts with U2AF2; the interaction is direct and recruits the Prp19 complex to RNA polymerase II C-terminal domain (CTD) and the pre-mRNA. Interacts with PRPF3. Interacts with APEX1, DNTT and PSMB4. Interacts with PSMC5. Interacts with KNSTRN. Interacts (via N-terminus) with CDC5L. Interacts with KHDC4. Interacts with USB1. Interacts with DDX41. In terms of tissue distribution, ubiquitous. Weakly expressed in senescent cells of different tissue origins. Highly expressed in tumor cell lines.

The protein localises to the nucleus. The protein resides in the nucleoplasm. Its subcellular location is the cytoplasm. It is found in the cytoskeleton. It localises to the spindle. The protein localises to the lipid droplet. The catalysed reaction is S-ubiquitinyl-[E2 ubiquitin-conjugating enzyme]-L-cysteine + [acceptor protein]-L-lysine = [E2 ubiquitin-conjugating enzyme]-L-cysteine + N(6)-ubiquitinyl-[acceptor protein]-L-lysine.. Its pathway is protein modification; protein ubiquitination. Ubiquitin-protein ligase which is a core component of several complexes mainly involved pre-mRNA splicing and DNA repair. Required for pre-mRNA splicing as component of the spliceosome. Core component of the PRP19C/Prp19 complex/NTC/Nineteen complex which is part of the spliceosome and participates in its assembly, its remodeling and is required for its activity. During assembly of the spliceosome, mediates 'Lys-63'-linked polyubiquitination of the U4 spliceosomal protein PRPF3. Ubiquitination of PRPF3 allows its recognition by the U5 component PRPF8 and stabilizes the U4/U5/U6 tri-snRNP spliceosomal complex. Recruited to RNA polymerase II C-terminal domain (CTD) and the pre-mRNA, it may also couple the transcriptional and spliceosomal machineries. The XAB2 complex, which contains PRPF19, is also involved in pre-mRNA splicing, transcription and transcription-coupled repair. Beside its role in pre-mRNA splicing PRPF19, as part of the PRP19-CDC5L complex, plays a role in the DNA damage response/DDR. It is recruited to the sites of DNA damage by the RPA complex where PRPF19 directly ubiquitinates RPA1 and RPA2. 'Lys-63'-linked polyubiquitination of the RPA complex allows the recruitment of the ATR-ATRIP complex and the activation of ATR, a master regulator of the DNA damage response. May also play a role in DNA double-strand break (DSB) repair by recruiting the repair factor SETMAR to altered DNA. As part of the PSO4 complex may also be involved in the DNA interstrand cross-links/ICLs repair process. In addition, may also mediate 'Lys-48'-linked polyubiquitination of substrates and play a role in proteasomal degradation. May play a role in the biogenesis of lipid droplets. May play a role in neural differentiation possibly through its function as part of the spliceosome. In Homo sapiens (Human), this protein is Pre-mRNA-processing factor 19.